Here is a 188-residue protein sequence, read N- to C-terminus: GTPase KRas (188 aa).

Residues 10–18 (GAGGVGKSA), 29–35 (VDEYDPT), 59–60 (AG), and 116–119 (NKCD) contribute to the GTP site. The Effector region signature appears at 32-40 (YDPTIEDSY). Positions 167–188 (KEKMSKEGKKKKKKSKTKCVLM) are disordered. C185 carries the cysteine methyl ester modification. Residue C185 is the site of S-farnesyl cysteine attachment. A propeptide spans 186-188 (VLM) (removed in mature form).

This sequence belongs to the small GTPase superfamily. Ras family.

The protein localises to the cell membrane. Its subcellular location is the cytoplasm. It carries out the reaction GTP + H2O = GDP + phosphate + H(+). Alternates between an inactive form bound to GDP and an active form bound to GTP. Activated by a guanine nucleotide-exchange factor (GEF) and inactivated by a GTPase-activating protein (GAP). Functionally, ras proteins bind GDP/GTP and possess intrinsic GTPase activity. Plays an important role in the regulation of cell proliferation. May play a role in promoting oncogenic events by inducing transcriptional silencing of tumor suppressor genes (TSGs). This is GTPase KRas (kras) from Cyprinus carpio (Common carp).